The following is a 407-amino-acid chain: Peptidase T (407 aa).

His82 lines the Zn(2+) pocket. The active site involves Asp84. Residue Asp143 participates in Zn(2+) binding. Glu177 serves as the catalytic Proton acceptor. Zn(2+) contacts are provided by Glu178, Asp200, and His382.

Belongs to the peptidase M20B family. Zn(2+) is required as a cofactor.

The protein resides in the cytoplasm. The catalysed reaction is Release of the N-terminal residue from a tripeptide.. In terms of biological role, cleaves the N-terminal amino acid of tripeptides. The polypeptide is Peptidase T (Streptococcus pyogenes serotype M12 (strain MGAS2096)).